The sequence spans 449 residues: Putative gustatory receptor 77a (449 aa).

Residues 1–27 (MPLPLGDPLALAVSPQLGYIRITAMPR) are Cytoplasmic-facing. A helical transmembrane segment spans residues 28 to 50 (WLQLPGMSALGILYSLTRVFGLM). The Extracellular portion of the chain corresponds to 51-70 (ATANWSPRGIKRVRQSLYLR). The helical transmembrane segment at 71–93 (IHGCVMLIFVGCFSPFAFWCIFQ) threads the bilayer. Residues 94-102 (RMAFLRQNR) are Cytoplasmic-facing. Residues 103-125 (ILLMIGFNRYVLLLVCAFMTLWI) form a helical membrane-spanning segment. The Extracellular portion of the chain corresponds to 126 to 205 (HCFKQAEIIG…VRRNFMYACS (80 aa)). A helical transmembrane segment spans residues 206 to 228 (LVFVSVCQAILQLSLGMYTMAIL). Residues 229–298 (FLGHLVRHSN…LLKLHRSICS (70 aa)) are Cytoplasmic-facing. Residues 299-321 (LCAVQAVCFLGFVPLECTIHLFF) form a helical membrane-spanning segment. At 322–340 (TYFMKYSKFILRKYGRSFP) the chain is on the extracellular side. A helical transmembrane segment spans residues 341-363 (LNYFAIAFLVGLFTNLLLVILPT). Residues 364 to 420 (YYSERRFNCTREIIKGGGLAFPSRITVKQLRHTMHFYGLYLKNVEHVFAVSACGLFK) lie on the Cytoplasmic side of the membrane. The helical transmembrane segment at 421-443 (LNNAILFCIVGAILEYLMILIQF) threads the bilayer. Topologically, residues 444–449 (DKVLNK) are extracellular.

This sequence belongs to the insect chemoreceptor superfamily. Gustatory receptor (GR) family. Gr77a subfamily. In terms of tissue distribution, in larvae, is expressed in dorsal pharyngeal sense organ.

The protein resides in the cell membrane. Probable gustatory receptor which mediates acceptance or avoidance behavior, depending on its substrates. The polypeptide is Putative gustatory receptor 77a (Gr77a) (Drosophila melanogaster (Fruit fly)).